The following is a 670-amino-acid chain: MSQQLSFNASSAKPDKSFSNYFWGANDEGYHALLSRFSDVKHINEELRSFYHERANIEEDYAKRMAKLSRTTFSSLETGCLKESVQVMKAEVDNMAKSHLQISQLLQDDVENAFTRYAASLKDKKKMIVSGIEKVHKDKLSKHQALVKAQDKYHYLCKKVNYYVSQQNMLFGKELEKNNAKLNKTQNAITASSSDYQSAVAAVRDSYARWTNEWRSTCDKLQDIEEERRHFLKSVMWTFTLLISRSCFNDDQACERIRKNLEQCSVSQDVLEFIDAKSTGTGIPQPPKFYDYYKGEVPDDSVELVQANFQRAQTKIENDNMPLNRPYVLSATARNESSFENTLPNTPSAIQSLTTVSSNSSQNGRSSPKKSFLSKFKLTSRPSTPNVGNTAPDALSSPRNDSPLTSAADEQMKHLSLQEEPKQNPTPAAPGAFPNSNTLPPRYNELGSLPSPNSVSFTEDSRPNVNTPSRRQQIQEEFGSVLQMENRAVSPVYDSRKNGSRSSFTLRKSRSPKRPSSSLSQNASRLPRSLTPGNLEPNYDFGVRVDPASGTAPTDDEPYTDRDSSFVDDTINTKATGNTSNRLSLPAYPTDGGDTSIDNPTSTDGQRILGYVSALYDYDAAIPEEISFRKGDTIAVLKLYEDGWWEGFVVGEDDHNRGQFPSNFVREIEV.

The F-BAR domain occupies 16-269 (KSFSNYFWGA…NLEQCSVSQD (254 aa)). 2 disordered regions span residues 353 to 472 (LTTV…SRRQ) and 489 to 602 (VSPV…NPTS). A compositionally biased stretch (low complexity) spans 357-377 (SSNSSQNGRSSPKKSFLSKFK). Residues 380–389 (SRPSTPNVGN) are compositionally biased toward polar residues. Ser397 carries the post-translational modification Phosphoserine. The span at 410 to 422 (EQMKHLSLQEEPK) shows a compositional bias: basic and acidic residues. The segment covering 450–472 (PSPNSVSFTEDSRPNVNTPSRRQ) has biased composition (polar residues). A Phosphoserine modification is found at Ser503. The residue at position 531 (Thr531) is a Phosphothreonine. Positions 570–583 (TINTKATGNTSNRL) are enriched in polar residues. One can recognise an SH3 domain in the interval 607-670 (RILGYVSALY…PSNFVREIEV (64 aa)).

The protein resides in the cytoplasm. The protein localises to the cytoskeleton. In terms of biological role, required for normal septation. Involved in the disassembly of the medial ring during septation. The chain is Septation protein imp2 (imp2) from Schizosaccharomyces pombe (strain 972 / ATCC 24843) (Fission yeast).